We begin with the raw amino-acid sequence, 102 residues long: NADH-quinone oxidoreductase subunit K (102 aa).

3 helical membrane-spanning segments follow: residues 5–25, 30–50, and 62–82; these read LAHY…GIFV, IIVI…NLVA, and IFAM…LAIL.

The protein belongs to the complex I subunit 4L family. As to quaternary structure, NDH-1 is composed of 14 different subunits. Subunits NuoA, H, J, K, L, M, N constitute the membrane sector of the complex.

The protein resides in the cell inner membrane. It carries out the reaction a quinone + NADH + 5 H(+)(in) = a quinol + NAD(+) + 4 H(+)(out). Functionally, NDH-1 shuttles electrons from NADH, via FMN and iron-sulfur (Fe-S) centers, to quinones in the respiratory chain. The immediate electron acceptor for the enzyme in this species is believed to be ubiquinone. Couples the redox reaction to proton translocation (for every two electrons transferred, four hydrogen ions are translocated across the cytoplasmic membrane), and thus conserves the redox energy in a proton gradient. In Phenylobacterium zucineum (strain HLK1), this protein is NADH-quinone oxidoreductase subunit K.